Reading from the N-terminus, the 109-residue chain is MSQGVEFNRLMLDMRAMQMDAMSAPKPVSGAQEAGASSFADMLGQAVNKVAQTQQASSQLANAFEVGKSGIDLTDVMISSQKASVSFQALTQVRNKLVQAYQDIMQMPV.

It belongs to the FliE family.

The protein resides in the bacterial flagellum basal body. The sequence is that of Flagellar hook-basal body complex protein FliE from Pseudomonas syringae pv. tomato (strain ATCC BAA-871 / DC3000).